Here is a 244-residue protein sequence, read N- to C-terminus: Myosin-7 (244 aa).

The segment at Val1–Glu244 is rodlike tail (S2 and LMM domains). A coiled-coil region spans residues Val1–Glu244. The interval Glu216 to Glu244 is disordered. Positions Lys232–Glu244 are enriched in basic and acidic residues.

Muscle myosin is a hexameric protein that consists of 2 heavy chain subunits (MHC), 2 alkali light chain subunits (MLC) and 2 regulatory light chain subunits (MLC-2). Interacts with ECPAS. Interacts (via C-terminus) with LRRC39.

Its subcellular location is the cytoplasm. The protein localises to the myofibril. It is found in the sarcomere. Its function is as follows. Myosins are actin-based motor molecules with ATPase activity essential for muscle contraction. Forms regular bipolar thick filaments that, together with actin thin filaments, constitute the fundamental contractile unit of skeletal and cardiac muscle. The polypeptide is Myosin-7 (MYH7) (Papio hamadryas (Hamadryas baboon)).